Reading from the N-terminus, the 341-residue chain is tRNA N6-adenosine threonylcarbamoyltransferase (341 aa).

Residues H115 and H119 each coordinate Fe cation. Substrate contacts are provided by residues I137–G141, D170, G183, D187, and N276. D304 contributes to the Fe cation binding site.

This sequence belongs to the KAE1 / TsaD family. The cofactor is Fe(2+).

The protein resides in the cytoplasm. It carries out the reaction L-threonylcarbamoyladenylate + adenosine(37) in tRNA = N(6)-L-threonylcarbamoyladenosine(37) in tRNA + AMP + H(+). Its function is as follows. Required for the formation of a threonylcarbamoyl group on adenosine at position 37 (t(6)A37) in tRNAs that read codons beginning with adenine. Is involved in the transfer of the threonylcarbamoyl moiety of threonylcarbamoyl-AMP (TC-AMP) to the N6 group of A37, together with TsaE and TsaB. TsaD likely plays a direct catalytic role in this reaction. This is tRNA N6-adenosine threonylcarbamoyltransferase from Staphylococcus aureus (strain MRSA252).